Here is a 153-residue protein sequence, read N- to C-terminus: Endoribonuclease YbeY (153 aa).

Zn(2+) contacts are provided by His-116, His-120, and His-126.

This sequence belongs to the endoribonuclease YbeY family. Requires Zn(2+) as cofactor.

The protein localises to the cytoplasm. Functionally, single strand-specific metallo-endoribonuclease involved in late-stage 70S ribosome quality control and in maturation of the 3' terminus of the 16S rRNA. This is Endoribonuclease YbeY from Paraburkholderia phymatum (strain DSM 17167 / CIP 108236 / LMG 21445 / STM815) (Burkholderia phymatum).